Here is a 329-residue protein sequence, read N- to C-terminus: MEPAEEGEILAHRRFTATKMEYEKIRIIGEGTFGQVILARKGRARYALKKVSKEKEGLSVTTIREVQVLRAMGHPSIVRLIEVVVEPGGDIYMVFPYFPYDLNRFIRSNKMTCSEIKHIFYQIAQGVCYIHSKGIMHRDLKSANILLDQKLNASIADFGMARYTTKTGAYTPGMVTLWYRAPEILLGSSSYTYAVDIWSLGCILTEMYLGHMIFQGSTEMLQLEMVIHACGSINENSYPGVQDLPGFRNFRLPQSPRRIEGIIRKHDASAVELVSKMLCLDPSKRITVEQVVGSKYFEHEARRDASSAGLQGCSYREDRLSLSKRKNVD.

The Protein kinase domain maps to 22-297 (YEKIRIIGEG…VEQVVGSKYF (276 aa)). ATP-binding positions include 28–36 (IGEGTFGQV) and Lys49. The Proton acceptor role is filled by Asp139.

The protein belongs to the protein kinase superfamily. CMGC Ser/Thr protein kinase family. CDC2/CDKX subfamily. Component of the CTDK-I complex.

It localises to the nucleus. The protein resides in the nucleolus. The catalysed reaction is [DNA-directed RNA polymerase] + ATP = phospho-[DNA-directed RNA polymerase] + ADP + H(+). Its function is as follows. Catalytic subunit of the CTDK-I complex, which hyperphosphorylates the C-terminal heptapeptide repeat domain (CTD) of the largest RNA polymerase II subunit. Involved in RNA polymerase II transcriptional elongation and pre-mRNA 3'-end processing. This is Probable CTD kinase subunit alpha homolog (CTK1) from Encephalitozoon cuniculi (strain GB-M1) (Microsporidian parasite).